Here is a 196-residue protein sequence, read N- to C-terminus: UMP-CMP kinase (196 aa).

13-18 (GAGKGT) lines the ATP pocket. Positions 33–63 (SAGDLLRDERKKPDSQYGELIESYIRDGRIV) are NMP. A ribonucleoside 5'-phosphate-binding positions include Arg39, 61 to 63 (RIV), and 93 to 96 (GFPR). A CMP-binding site is contributed by Asn100. The LID stretch occupies residues 133–143 (ERGKSSGRSDD). Arg134 is an ATP binding site. A ribonucleoside 5'-phosphate-binding residues include Arg140 and Arg151. Lys179 contacts ATP.

This sequence belongs to the adenylate kinase family. UMP-CMP kinase subfamily. As to quaternary structure, monomer. The cofactor is Mg(2+).

The protein localises to the cytoplasm. The protein resides in the nucleus. It carries out the reaction CMP + ATP = CDP + ADP. The catalysed reaction is dCMP + ATP = dCDP + ADP. The enzyme catalyses UMP + ATP = UDP + ADP. It catalyses the reaction a 2'-deoxyribonucleoside 5'-diphosphate + ATP = a 2'-deoxyribonucleoside 5'-triphosphate + ADP. It carries out the reaction a ribonucleoside 5'-diphosphate + ATP = a ribonucleoside 5'-triphosphate + ADP. Catalyzes the phosphorylation of pyrimidine nucleoside monophosphates at the expense of ATP. Plays an important role in de novo pyrimidine nucleotide biosynthesis. Has preference for UMP and CMP as phosphate acceptors. Also displays broad nucleoside diphosphate kinase activity. This chain is UMP-CMP kinase (cmpk1), found in Xenopus tropicalis (Western clawed frog).